A 176-amino-acid chain; its full sequence is 3-hydroxyanthranilate 3,4-dioxygenase (176 aa).

Residue Arg-44 coordinates O2. The Fe cation site is built by His-48, Glu-54, and His-92. Position 54 (Glu-54) interacts with substrate. Arg-96 and Glu-106 together coordinate substrate. Fe cation contacts are provided by Cys-121, Cys-124, Cys-158, and Cys-161.

Belongs to the 3-HAO family. Homodimer. Requires Fe(2+) as cofactor.

The catalysed reaction is 3-hydroxyanthranilate + O2 = (2Z,4Z)-2-amino-3-carboxymuconate 6-semialdehyde. Its pathway is cofactor biosynthesis; NAD(+) biosynthesis; quinolinate from L-kynurenine: step 3/3. Catalyzes the oxidative ring opening of 3-hydroxyanthranilate to 2-amino-3-carboxymuconate semialdehyde, which spontaneously cyclizes to quinolinate. The sequence is that of 3-hydroxyanthranilate 3,4-dioxygenase from Xanthomonas campestris pv. campestris (strain B100).